Here is a 348-residue protein sequence, read N- to C-terminus: Calcium/calmodulin-dependent protein kinase type 1 (348 aa).

Positions 7–22 (RDGSGPAPNATIREKY) match the Nuclear localization signal 1 motif. The 257-residue stretch at 22-278 (YDFRDVLGTG…CQDALSHPWI (257 aa)) folds into the Protein kinase domain. ATP contacts are provided by residues 28-36 (LGTGAFSKV) and K52. Residues 71–78 (KVLRKLRH) carry the Nuclear localization signal 2 motif. D144 (proton acceptor) is an active-site residue. T179 carries the post-translational modification Phosphothreonine; by ckk-1. The segment at 278-318 (ISGNTAYTHDIHGTVAVHLKKSLAKRNWKKAYNAAAAIRQL) is autoinhibitory domain. The short motif at 288–294 (IHGTVAV) is the Nuclear export sequence element. Residues 297–307 (KKSLAKRNWKK) carry the Nuclear localization signal 3 motif. The interval 298–319 (KSLAKRNWKKAYNAAAAIRQLQ) is calmodulin-binding. A compositionally biased stretch (polar residues) spans 327–338 (SNRLQKQASQQQ). The tract at residues 327–348 (SNRLQKQASQQQPEPPTPAFHA) is disordered. A compositionally biased stretch (pro residues) spans 339-348 (PEPPTPAFHA).

The protein belongs to the protein kinase superfamily. CAMK Ser/Thr protein kinase family. CaMK subfamily. Interacts with importin ima-3; affinity for ima-3 is increased in the presence of Ca(2+) and calmodulin and leads to increased nuclear accumulation of cmk-1 in FLP neurons upon prolonged heat activation. Requires Mg(2+) as cofactor. Post-translationally, phosphorylation at Thr-179 can promote both nuclear export and import, sustaining nucleocytoplasmic shuttling. As to expression, expressed in head and tail neurons and vulval muscles. Throughout the nervous system. Detected in neurites and neuronal cell bodies. Expressed in the mechanosensory neurons, AVM and ALM, and in the interneurons, AVA, AVB and AVD. Expressed in the right and left ASE neurons where it functions cell-autonomously to control salt-avoidance learning. Expressed in FLP and AFD thermosensory neurons.

It localises to the nucleus. The protein resides in the cytoplasm. It catalyses the reaction L-seryl-[protein] + ATP = O-phospho-L-seryl-[protein] + ADP + H(+). It carries out the reaction L-threonyl-[protein] + ATP = O-phospho-L-threonyl-[protein] + ADP + H(+). With respect to regulation, activated by Ca(2+)/calmodulin. Binding of calmodulin results in a conformational change that generates functional binding sites for both substrate and ATP, and thus relieves autoinhibition and lowers the Km of substrate binding. Must be phosphorylated by ckk-1 to be maximally active but this does not appear to be required for activity in AFD neurons. Functionally, calcium/calmodulin-dependent protein kinase that operates in the calcium-triggered CaMKK-CaMK1 signaling cascade which results in transcriptional activation. Transcriptional activation occurs at least in part through phosphorylation of crh-1. Regulates gene expression, sensory morphology, and function of the AFD thermosensory neurons. Involved in long-term adaptation of AFD neurons to temperatures warmer than the initial acclimatized cultivation temperature. Acts in the FLP thermal nociceptors to moderate the responsiveness to noxious heat and controls neuropeptide release from FLP neurons in response to temperature elevations. Regulates the dauer decision, the decision of the larvae to enter into the alternative stress-resistant and long-lived dauer developmental stage, based on the feeding state, primarily in the AWC sensory neurons. Acts non cell-autonomously in the AWC neurons to regulate expression of the daf-28 insulin-like peptide and cell-autonomously in the ASI sensory neurons to regulate expression of the growth promoting daf-7 in a food-regulated manner. Plays a role in memory-based thermal response of an individual AFD neuron cell. Influences habituation and sensitivity to repeated mechanosensory stimuli. Involved in chemotaxis response in AWC neurons to attractant 2-heptanone, a volatile organic compound emitted by the nematode pathogenic bacterium B.nematocida B16. Acts in the ASE salt-sensing neurons to promote a type of aversive gustatory-associated learning called salt-avoidance learning via regulation of crh-1 signaling and the promotion of long-term memory formation, but is not involved in salt attraction. Represses transcription of glutamate receptor glr-1 in the nucleus basally and in response to changes in synaptic activity. This Caenorhabditis elegans protein is Calcium/calmodulin-dependent protein kinase type 1.